The following is a 266-amino-acid chain: Dihydropteroate synthase (266 aa).

Positions 12-260 constitute a Pterin-binding domain; that stretch reads AAIMGILNVT…DVKANQDIVA (249 aa). A Mg(2+)-binding site is contributed by asparagine 19. (7,8-dihydropterin-6-yl)methyl diphosphate contacts are provided by residues threonine 59, aspartate 93, asparagine 112, aspartate 176, lysine 212, and 248–250; that span reads RVH.

This sequence belongs to the DHPS family. In terms of assembly, homodimer or homotrimer. It depends on Mg(2+) as a cofactor.

The enzyme catalyses (7,8-dihydropterin-6-yl)methyl diphosphate + 4-aminobenzoate = 7,8-dihydropteroate + diphosphate. It participates in cofactor biosynthesis; tetrahydrofolate biosynthesis; 7,8-dihydrofolate from 2-amino-4-hydroxy-6-hydroxymethyl-7,8-dihydropteridine diphosphate and 4-aminobenzoate: step 1/2. Catalyzes the condensation of para-aminobenzoate (pABA) with 6-hydroxymethyl-7,8-dihydropterin diphosphate (DHPt-PP) to form 7,8-dihydropteroate (H2Pte), the immediate precursor of folate derivatives. The chain is Dihydropteroate synthase (folP) from Streptococcus pyogenes serotype M3 (strain ATCC BAA-595 / MGAS315).